A 280-amino-acid polypeptide reads, in one-letter code: MATYLIGDVHGCYDELIALLHKVEFTPGKDTLWLTGDLVARGPGSLDVLRYVKSLGDSVRLVLGNHDLHLLAVFAGISRNKPKDRLTPLLEAPDADELLNWLRRQPLLQIDEEKKLVMAHAGITPQWDLQTAKECARDVEAVLSSDSYPFFLDAMYGDMPNNWSPELRGLGRLRFITNAFTRMRFCFPNGQLDMYSKESPEEAPAPLKPWFAIPGPVAEEYSIAFGHWASLEGKGTPEGIYALDTGCCWGGSLTCLRWEDKQYFVQPSNRHKDLGEAAAS.

This sequence belongs to the Ap4A hydrolase family.

It carries out the reaction P(1),P(4)-bis(5'-adenosyl) tetraphosphate + H2O = 2 ADP + 2 H(+). Its function is as follows. Hydrolyzes diadenosine 5',5'''-P1,P4-tetraphosphate to yield ADP. The sequence is that of Bis(5'-nucleosyl)-tetraphosphatase, symmetrical from Shigella flexneri serotype 5b (strain 8401).